The chain runs to 271 residues: Type III pantothenate kinase (271 aa).

Residue 6–13 (DVRNTHTV) coordinates ATP. 109–112 (GADR) is a binding site for substrate. Catalysis depends on aspartate 111, which acts as the Proton acceptor. Aspartate 131 lines the K(+) pocket. Residue serine 134 participates in ATP binding. A substrate-binding site is contributed by threonine 186.

The protein belongs to the type III pantothenate kinase family. In terms of assembly, homodimer. It depends on NH4(+) as a cofactor. Requires K(+) as cofactor.

It localises to the cytoplasm. The catalysed reaction is (R)-pantothenate + ATP = (R)-4'-phosphopantothenate + ADP + H(+). Its pathway is cofactor biosynthesis; coenzyme A biosynthesis; CoA from (R)-pantothenate: step 1/5. In terms of biological role, catalyzes the phosphorylation of pantothenate (Pan), the first step in CoA biosynthesis. In Mycolicibacterium smegmatis (strain ATCC 700084 / mc(2)155) (Mycobacterium smegmatis), this protein is Type III pantothenate kinase.